A 195-amino-acid chain; its full sequence is Imidazoleglycerol-phosphate dehydratase (195 aa).

Belongs to the imidazoleglycerol-phosphate dehydratase family.

Its subcellular location is the cytoplasm. It carries out the reaction D-erythro-1-(imidazol-4-yl)glycerol 3-phosphate = 3-(imidazol-4-yl)-2-oxopropyl phosphate + H2O. The protein operates within amino-acid biosynthesis; L-histidine biosynthesis; L-histidine from 5-phospho-alpha-D-ribose 1-diphosphate: step 6/9. In Methanosphaerula palustris (strain ATCC BAA-1556 / DSM 19958 / E1-9c), this protein is Imidazoleglycerol-phosphate dehydratase.